A 295-amino-acid chain; its full sequence is sn-glycerol-3-phosphate transport system permease protein UgpA (295 aa).

Over 1–11 the chain is Cytoplasmic; it reads MSSSRPVFRSR. The helical transmembrane segment at 12-32 threads the bilayer; sequence WLPYLLVAPQLVITVIFFIWP. Residues 33 to 80 lie on the Periplasmic side of the membrane; that stretch reads AGEALWYSLQSVDPFGFSSQFVGLENFVALFHDSYYLDAFWTTIKFSA. An ABC transmembrane type-1 domain is found at 76–284; it reads IKFSALVTFS…FLVIILTVVQ (209 aa). The helical transmembrane segment at 81–101 threads the bilayer; it reads LVTFSGLLVSLFFAALVDYVV. The Cytoplasmic segment spans residues 102-109; that stretch reads RGSRFYQT. The helical transmembrane segment at 110-130 threads the bilayer; it reads LMLLPYAVAPAVAAVLWIFLF. Residues 131–157 lie on the Periplasmic side of the membrane; the sequence is NPGRGLITHFLGEFGYDWNHAQNSGQA. Residues 158 to 178 form a helical membrane-spanning segment; it reads MFLVVFASVWKQISYNFLFFF. Residues 179-207 lie on the Cytoplasmic side of the membrane; that stretch reads AALQSIPRSLVEAAAIDGAGPIRRFFRLS. A helical transmembrane segment spans residues 208–228; sequence LPLIAPVSFFLLVVNLVYAFF. At 229 to 262 the chain is on the periplasmic side; the sequence is DTFPVIDAATAGGPVQATTTLIYKIYCEGFTGLD. The chain crosses the membrane as a helical span at residues 263–283; that stretch reads LSASAAQSVVLMFLVIILTVV. Residues 284–295 are Cytoplasmic-facing; the sequence is QFRYVESKVRYQ.

Belongs to the binding-protein-dependent transport system permease family. UgpAE subfamily. The complex is composed of two ATP-binding proteins (UgpC), two transmembrane proteins (UgpA and UgpE) and a solute-binding protein (UgpB).

The protein localises to the cell inner membrane. Part of the ABC transporter complex UgpBAEC involved in sn-glycerol-3-phosphate (G3P) import. Probably responsible for the translocation of the substrate across the membrane. The protein is sn-glycerol-3-phosphate transport system permease protein UgpA (ugpA) of Salmonella typhi.